Here is a 306-residue protein sequence, read N- to C-terminus: Glycine--tRNA ligase alpha subunit (306 aa).

Belongs to the class-II aminoacyl-tRNA synthetase family. As to quaternary structure, tetramer of two alpha and two beta subunits.

The protein localises to the cytoplasm. The catalysed reaction is tRNA(Gly) + glycine + ATP = glycyl-tRNA(Gly) + AMP + diphosphate. The chain is Glycine--tRNA ligase alpha subunit from Aliivibrio fischeri (strain ATCC 700601 / ES114) (Vibrio fischeri).